We begin with the raw amino-acid sequence, 286 residues long: 2-hydroxy-6-oxo-6-phenylhexa-2,4-dienoate hydrolase (286 aa).

One can recognise an AB hydrolase-1 domain in the interval 36 to 271 (VIMLHGGGPG…RCGHWAQWEH (236 aa)). Residues 42 to 43 (GG), asparagine 51, asparagine 111, serine 180, and arginine 190 each bind substrate. The Proton acceptor role is filled by histidine 265. Tryptophan 266 provides a ligand contact to substrate.

This sequence belongs to the AB hydrolase superfamily. BphD family. Homodimer.

It catalyses the reaction 2,6-dioxo-6-phenylhexa-3-enoate + H2O = 2-oxopent-4-enoate + benzoate + H(+). The protein operates within xenobiotic degradation; biphenyl degradation; 2-hydroxy-2,4-pentadienoate and benzoate from biphenyl: step 4/4. Functionally, catalyzes an unusual C-C bond hydrolysis of 2-hydroxy-6-oxo-6-phenylhexa-2,4-dienoic acid (HOPDA) to produce benzoic acid and 2-hydroxy-2,4-pentadienoic acid (HPD). This chain is 2-hydroxy-6-oxo-6-phenylhexa-2,4-dienoate hydrolase, found in Burkholderia cepacia (Pseudomonas cepacia).